We begin with the raw amino-acid sequence, 201 residues long: CASP-like protein 2B2 (201 aa).

Residues Met-1–Arg-28 lie on the Cytoplasmic side of the membrane. The helical transmembrane segment at Val-29–Ile-49 threads the bilayer. Over Ala-50–Lys-71 the chain is Extracellular. The chain crosses the membrane as a helical span at residues Ala-72–Val-92. Residues Arg-93–Pro-108 lie on the Cytoplasmic side of the membrane. The chain crosses the membrane as a helical span at residues Leu-109–Ala-129. At Ala-130–Ala-166 the chain is on the extracellular side. The chain crosses the membrane as a helical span at residues Ser-167–Phe-187. The Cytoplasmic portion of the chain corresponds to Arg-188 to Trp-201.

It belongs to the Casparian strip membrane proteins (CASP) family. As to quaternary structure, homodimer and heterodimers.

It is found in the cell membrane. This Arabidopsis thaliana (Mouse-ear cress) protein is CASP-like protein 2B2.